The chain runs to 259 residues: Hemin import ATP-binding protein HmuV (259 aa).

The region spanning 8 to 242 (ISANNISYRI…KMIENVYGHK (235 aa)) is the ABC transporter domain. 40 to 47 (GPNGAGKS) serves as a coordination point for ATP.

The protein belongs to the ABC transporter superfamily. Heme (hemin) importer (TC 3.A.1.14.5) family. The complex is composed of two ATP-binding proteins (HmuV), two transmembrane proteins (HmuU) and a solute-binding protein (HmuT).

Its subcellular location is the cell inner membrane. Its function is as follows. Part of the ABC transporter complex HmuTUV involved in hemin import. Responsible for energy coupling to the transport system. The protein is Hemin import ATP-binding protein HmuV of Aliivibrio fischeri (strain ATCC 700601 / ES114) (Vibrio fischeri).